Here is a 284-residue protein sequence, read N- to C-terminus: Tropomyosin (284 aa).

Positions 1–284 form a coiled coil; sequence MDGIKKKMIA…DQTFAELTGY (284 aa). Composition is skewed to basic and acidic residues over residues 29-42 and 111-136; these read LKQKEEEQEKKETE and AKFDEASKTAEESERGRKELEIRSIA. Disordered stretches follow at residues 29 to 49 and 111 to 149; these read LKQKEEEQEKKETEIGELNNR and AKFDEASKTAEESERGRKELEIRSIADDEGLSQLEDQQK.

It belongs to the tropomyosin family.

In terms of biological role, tropomyosin, in association with the troponin complex, plays a central role in the calcium dependent regulation of muscle contraction. This chain is Tropomyosin, found in Clonorchis sinensis (Chinese liver fluke).